Reading from the N-terminus, the 172-residue chain is Transcriptional repressor NrdR (172 aa).

The segment at 3 to 34 is a zinc-finger region; the sequence is CPFCGEADTKVIDSRLVAEGDQVRRRRECLSC. The ATP-cone domain occupies 49–139; that stretch reads PRVVKQDGTR…VYRSFQDINE (91 aa).

It belongs to the NrdR family. Zn(2+) serves as cofactor.

Negatively regulates transcription of bacterial ribonucleotide reductase nrd genes and operons by binding to NrdR-boxes. In Marinobacter nauticus (strain ATCC 700491 / DSM 11845 / VT8) (Marinobacter aquaeolei), this protein is Transcriptional repressor NrdR.